A 504-amino-acid chain; its full sequence is UDP-N-acetylmuramoylalanine--D-glutamate ligase (504 aa).

An ATP-binding site is contributed by 129-135 (GTNGKTT).

The protein belongs to the MurCDEF family.

It localises to the cytoplasm. It carries out the reaction UDP-N-acetyl-alpha-D-muramoyl-L-alanine + D-glutamate + ATP = UDP-N-acetyl-alpha-D-muramoyl-L-alanyl-D-glutamate + ADP + phosphate + H(+). It functions in the pathway cell wall biogenesis; peptidoglycan biosynthesis. Cell wall formation. Catalyzes the addition of glutamate to the nucleotide precursor UDP-N-acetylmuramoyl-L-alanine (UMA). This is UDP-N-acetylmuramoylalanine--D-glutamate ligase from Burkholderia mallei (strain ATCC 23344).